Consider the following 462-residue polypeptide: Nuclear factor interleukin-3-regulated protein (462 aa).

Residue K24 forms a Glycyl lysine isopeptide (Lys-Gly) (interchain with G-Cter in SUMO2) linkage. Positions 73–136 constitute a bZIP domain; it reads DAMYWEKRRK…GLISSTAYAQ (64 aa). Positions 79–95 are basic motif; the sequence is KRRKNNEAAKRSREKRR. Positions 99 to 106 are leucine-zipper; the sequence is LVLENKLI. 2 disordered regions span residues 189–237 and 258–302; these read DVSE…DDRG and SPPL…IHSP. The span at 201-210 shows a compositional bias: polar residues; that stretch reads ESSVQGSCRS. Residue K214 forms a Glycyl lysine isopeptide (Lys-Gly) (interchain with G-Cter in SUMO2) linkage. A Glycyl lysine isopeptide (Lys-Gly) (interchain with G-Cter in SUMO1); alternate cross-link involves residue K219. A Glycyl lysine isopeptide (Lys-Gly) (interchain with G-Cter in SUMO2); alternate cross-link involves residue K219. The segment covering 227-237 has biased composition (basic and acidic residues); it reads SYTREPRDDRG. The span at 264-274 shows a compositional bias: polar residues; sequence VNRSSSNSPRT. A necessary for transcriptional repression and sufficient for interaction with DR1 region spans residues 299–363; it reads IHSPVELKHV…PIDMTSKRHF (65 aa). At S301 the chain carries Phosphoserine. Residues K306, K314, K326, K332, K337, and K350 each participate in a glycyl lysine isopeptide (Lys-Gly) (interchain with G-Cter in SUMO2) cross-link. Position 353 is a phosphoserine (S353). Residues K360, K394, K401, K406, K412, K419, K424, K434, and K448 each participate in a glycyl lysine isopeptide (Lys-Gly) (interchain with G-Cter in SUMO2) cross-link.

The protein belongs to the bZIP family. NFIL3 subfamily. Homodimer. Binds DNA as a dimer. Interacts with DR1. Interacts with PER2 and CRY2. Interacts with NR0B2. Interacts with MYSM1. In terms of tissue distribution, expressed in bladder stomach, thyroid, spinal cord, lymph node, trachea, adrenal gland, bone marrow and muscle.

The protein resides in the nucleus. In terms of biological role, acts as a transcriptional regulator that recognizes and binds to the sequence 5'-[GA]TTA[CT]GTAA[CT]-3', a sequence present in many cellular and viral promoters. Represses transcription from promoters with activating transcription factor (ATF) sites. Represses promoter activity in osteoblasts. Represses transcriptional activity of PER1. Represses transcriptional activity of PER2 via the B-site on the promoter. Activates transcription from the interleukin-3 promoter in T-cells. Competes for the same consensus-binding site with PAR DNA-binding factors (DBP, HLF and TEF). Component of the circadian clock that acts as a negative regulator for the circadian expression of PER2 oscillation in the cell-autonomous core clock. Protects pro-B cells from programmed cell death. Represses the transcription of CYP2A5. Positively regulates the expression and activity of CES2 by antagonizing the repressive action of NR1D1 on CES2. Required for the development of natural killer cell precursors. This Homo sapiens (Human) protein is Nuclear factor interleukin-3-regulated protein (NFIL3).